The primary structure comprises 314 residues: Acetaldehyde dehydrogenase 2 (314 aa).

11–14 (SGNI) lines the NAD(+) pocket. Cys-129 acts as the Acyl-thioester intermediate in catalysis. NAD(+)-binding positions include 160-168 (SAGPGTRAN) and Asn-291.

Belongs to the acetaldehyde dehydrogenase family.

The catalysed reaction is acetaldehyde + NAD(+) + CoA = acetyl-CoA + NADH + H(+). In Rhodococcus erythropolis (strain PR4 / NBRC 100887), this protein is Acetaldehyde dehydrogenase 2.